A 906-amino-acid chain; its full sequence is Protein translocase subunit SecA (906 aa).

ATP contacts are provided by residues glutamine 89, 107–111 (GEGKT), and aspartate 502. 4 residues coordinate Zn(2+): cysteine 890, cysteine 892, cysteine 901, and histidine 902.

The protein belongs to the SecA family. As to quaternary structure, monomer and homodimer. Part of the essential Sec protein translocation apparatus which comprises SecA, SecYEG and auxiliary proteins SecDF-YajC and YidC. Zn(2+) is required as a cofactor.

The protein localises to the cell inner membrane. It localises to the cytoplasm. It catalyses the reaction ATP + H2O + cellular proteinSide 1 = ADP + phosphate + cellular proteinSide 2.. Part of the Sec protein translocase complex. Interacts with the SecYEG preprotein conducting channel. Has a central role in coupling the hydrolysis of ATP to the transfer of proteins into and across the cell membrane, serving both as a receptor for the preprotein-SecB complex and as an ATP-driven molecular motor driving the stepwise translocation of polypeptide chains across the membrane. This chain is Protein translocase subunit SecA, found in Brucella canis (strain ATCC 23365 / NCTC 10854 / RM-666).